The following is a 695-amino-acid chain: ATP-dependent zinc metalloprotease FTSH 2, chloroplastic (695 aa).

The N-terminal 47 residues, 1–47 (MAASSACLVGNGLSVNTTTKQRLSKHFSGRQTSFSSVIRTSKVNVVK), are a transit peptide targeting the chloroplast. Residues 48–82 (ASLDGKKKQEGRRDFLKILLGNAGVGLVASGKANA) constitute a thylakoid transit peptide. The Lumenal, thylakoid portion of the chain corresponds to 83 to 167 (DEQGVSSSRM…AHNAQEDQGS (85 aa)). A helical transmembrane segment spans residues 168-188 (VLFNLIGNLAFPALLIGGLFL). The Stromal segment spans residues 189–695 (LSRRSGGGMG…PASAPTPAAV (507 aa)). 267-274 (GPPGTGKT) serves as a coordination point for ATP. H488 contacts Zn(2+). The active site involves E489. Zn(2+) is bound by residues H492 and D566. Residues 673-695 (PPENRVPSSTTTTPASAPTPAAV) are disordered. The span at 679-695 (PSSTTTTPASAPTPAAV) shows a compositional bias: low complexity.

In the N-terminal section; belongs to the AAA ATPase family. The protein in the C-terminal section; belongs to the peptidase M41 family. Interacts with CHIP and FTSH5. Heterohexamers with FTSH1, FTSH5 and FTSH8. May also form homooligomers. It depends on Zn(2+) as a cofactor. Post-translationally, the FTSH2 precursor is ubiquitinated by CHIP in the cytoplasm. Expressed in cotyledons, cauline and rosette leaves, stems, sepals, flovers and siliques. Very low in roots.

It localises to the plastid. Its subcellular location is the chloroplast thylakoid membrane. Functionally, part of a complex that function as an ATP-dependent zinc metallopeptidase. Involved in the thylakoid formation and in the removal of damaged D1 in the photosystem II, preventing cell death under high-intensity light conditions, but not involved in thermotolerance. This Arabidopsis thaliana (Mouse-ear cress) protein is ATP-dependent zinc metalloprotease FTSH 2, chloroplastic (FTSH2).